A 316-amino-acid polypeptide reads, in one-letter code: Aquaglyceroporin-2 (316 aa).

Positions 1-31 are disordered; sequence MADERGPINKSGPSSTYGATENNGESGGTRG. The Cytoplasmic portion of the chain corresponds to 1–59; that stretch reads MADERGPINKSGPSSTYGATENNGESGGTRGAPATEDVIVIQDSGWYYIKFRFKEPFAE. The span at 11–24 shows a compositional bias: polar residues; the sequence is SGPSSTYGATENNG. Residues 60–80 form a helical membrane-spanning segment; the sequence is FLGTFILVAFGVGAIAQTVLS. Over 81 to 86 the chain is Extracellular; the sequence is KGATGN. A helical membrane pass occupies residues 87–107; the sequence is WITIALGFGLGLALGIAVSGH. At 108–131 the chain is on the cytoplasmic side; sequence YSGGHLNPAVTITLAIYRKFPWVK. Residues 114–116 carry the NPA 1 motif; sequence NPA. Residues 132–152 traverse the membrane as a helical segment; it reads VPVYITAQVLGAFVAAAVIYL. Over 153-187 the chain is Extracellular; sequence NYLPAIYNFAGDKRDVIGANATAGIFATYPQPFMS. Asn-172 is a glycosylation site (N-linked (GlcNAc...) asparagine). Residues 188-208 traverse the membrane as a helical segment; it reads IGGAFFSEALGTFFLLFVILA. The Cytoplasmic segment spans residues 209–219; it reads MTDERNVPTTR. A helical transmembrane segment spans residues 220–240; it reads IVAPITIGLTLTAIAISLGFE. Over 241 to 271 the chain is Extracellular; it reads TGFSLNAARDFGPRLFTFFIGYGVEVFTAYK. Residues 246 to 248 carry the NPA 2 motif; that stretch reads NAA. Residues 272-292 traverse the membrane as a helical segment; the sequence is FYFWIPLVAPIVGGLVAGFVY. Topologically, residues 293-316 are cytoplasmic; it reads DSLLYWGEKSFLNKNVHHEHRAVA.

Belongs to the MIP/aquaporin (TC 1.A.8) family.

The protein resides in the cell membrane. It is found in the membrane. It catalyses the reaction H2O(in) = H2O(out). It carries out the reaction glycerol(in) = glycerol(out). With respect to regulation, polyethylene glycol (PEG) stimulates whereas glycerol inhibits the aquaporin activity. Functionally, water channel required to facilitate the transport of water across membranes. Stimulates plant drought tolerance by facilitating the transport of water from the arbuscular mycorrhiza fungus to host plants. This chain is Aquaglyceroporin-2, found in Rhizophagus irregularis (Arbuscular mycorrhizal fungus).